The chain runs to 307 residues: Coproporphyrin III ferrochelatase (307 aa).

Residues Tyr-12, Arg-29, 45–46, Ser-53, and Tyr-124 each bind Fe-coproporphyrin III; that span reads RY. The Fe(2+) site is built by His-181 and Glu-263.

This sequence belongs to the ferrochelatase family.

The protein resides in the cytoplasm. The enzyme catalyses Fe-coproporphyrin III + 2 H(+) = coproporphyrin III + Fe(2+). It participates in porphyrin-containing compound metabolism; protoheme biosynthesis. In terms of biological role, involved in coproporphyrin-dependent heme b biosynthesis. Catalyzes the insertion of ferrous iron into coproporphyrin III to form Fe-coproporphyrin III. The polypeptide is Coproporphyrin III ferrochelatase (Staphylococcus aureus (strain COL)).